The chain runs to 732 residues: Translation initiation factor IF-2 (732 aa).

The tract at residues 40 to 147 (PEVVEKLDHT…QQEQPMKKEK (108 aa)) is disordered. Residues 42–67 (VVEKLDHTYNKKNERPQASAPKEKQK) show a composition bias toward basic and acidic residues. Basic residues predominate over residues 90–103 (KVPKKKSANKKKEG). The span at 104–117 (KKHDLQLQQQEKKI) shows a compositional bias: basic and acidic residues. The segment covering 118–129 (FHQQKKKIKGKA) has biased composition (basic residues). The region spanning 233-402 (ERPPVVTIMG…LLVSEMEELK (170 aa)) is the tr-type G domain. Residues 242-249 (GHVDHGKT) are G1. GTP is bound at residue 242–249 (GHVDHGKT). A G2 region spans residues 267 to 271 (GITQH). The segment at 288 to 291 (DTPG) is G3. Residues 288-292 (DTPGH) and 342-345 (NKMD) each bind GTP. The segment at 342–345 (NKMD) is G4. The G5 stretch occupies residues 378-380 (SAK).

The protein belongs to the TRAFAC class translation factor GTPase superfamily. Classic translation factor GTPase family. IF-2 subfamily.

It is found in the cytoplasm. In terms of biological role, one of the essential components for the initiation of protein synthesis. Protects formylmethionyl-tRNA from spontaneous hydrolysis and promotes its binding to the 30S ribosomal subunits. Also involved in the hydrolysis of GTP during the formation of the 70S ribosomal complex. The chain is Translation initiation factor IF-2 from Geobacillus sp. (strain WCH70).